Here is a 249-residue protein sequence, read N- to C-terminus: Probable transcriptional regulatory protein LBJ_0543 (249 aa).

It belongs to the TACO1 family.

The protein resides in the cytoplasm. In Leptospira borgpetersenii serovar Hardjo-bovis (strain JB197), this protein is Probable transcriptional regulatory protein LBJ_0543.